The sequence spans 428 residues: Serine--tRNA ligase (428 aa).

Position 231 to 233 (231 to 233 (TSE)) interacts with L-serine. ATP-binding positions include 262–264 (RRE) and Val-278. Glu-285 provides a ligand contact to L-serine. ATP is bound at residue 349 to 352 (ELTS). Residue Thr-384 participates in L-serine binding.

The protein belongs to the class-II aminoacyl-tRNA synthetase family. Type-1 seryl-tRNA synthetase subfamily. As to quaternary structure, homodimer. The tRNA molecule binds across the dimer.

The protein localises to the cytoplasm. It carries out the reaction tRNA(Ser) + L-serine + ATP = L-seryl-tRNA(Ser) + AMP + diphosphate + H(+). The catalysed reaction is tRNA(Sec) + L-serine + ATP = L-seryl-tRNA(Sec) + AMP + diphosphate + H(+). The protein operates within aminoacyl-tRNA biosynthesis; selenocysteinyl-tRNA(Sec) biosynthesis; L-seryl-tRNA(Sec) from L-serine and tRNA(Sec): step 1/1. Functionally, catalyzes the attachment of serine to tRNA(Ser). Is also able to aminoacylate tRNA(Sec) with serine, to form the misacylated tRNA L-seryl-tRNA(Sec), which will be further converted into selenocysteinyl-tRNA(Sec). This chain is Serine--tRNA ligase, found in Bifidobacterium longum (strain NCC 2705).